Reading from the N-terminus, the 290-residue chain is MSELRFFTSTTEVQANHILDLLSLEFGEEDYAIATTEVDEKRDIWETSIYLMFDEEDDILARVNAALVTEFPDLPVEREVIPDIDWIAKSLEGLTPVRAGRFLVHGSHDRDKVRPHDLAIEIDAGQAFGTGHHGTTAGCLEMIDSVVRARRPRNALDLGTGSGVLAIAVRKLVNVPVLATDIDPIAVRVAKENGTRNGVPNGIEWRTAPGFHSTAFGEFGPFDLIIANILARPLMKMAPQLVTHLAPGGSVILSGILASQRWKVIAAYNGAGVKHVRTIWRNGWVTIHLQ.

S-adenosyl-L-methionine is bound by residues Thr-136, Gly-159, Asp-181, and Asn-228.

This sequence belongs to the methyltransferase superfamily. PrmA family.

It is found in the cytoplasm. The enzyme catalyses L-lysyl-[protein] + 3 S-adenosyl-L-methionine = N(6),N(6),N(6)-trimethyl-L-lysyl-[protein] + 3 S-adenosyl-L-homocysteine + 3 H(+). Its function is as follows. Methylates ribosomal protein L11. The polypeptide is Ribosomal protein L11 methyltransferase (Allorhizobium ampelinum (strain ATCC BAA-846 / DSM 112012 / S4) (Agrobacterium vitis (strain S4))).